We begin with the raw amino-acid sequence, 212 residues long: uncharacterized protein (212 aa).

Residues 29–146 (KGKAGEKLVK…AAFHPKCSLK (118 aa)) form the NERD domain.

This is an uncharacterized protein from Bacillus anthracis.